Here is a 158-residue protein sequence, read N- to C-terminus: Ribosome maturation factor RimP (158 aa).

This sequence belongs to the RimP family.

Its subcellular location is the cytoplasm. Required for maturation of 30S ribosomal subunits. The polypeptide is Ribosome maturation factor RimP (Lactobacillus gasseri (strain ATCC 33323 / DSM 20243 / BCRC 14619 / CIP 102991 / JCM 1131 / KCTC 3163 / NCIMB 11718 / NCTC 13722 / AM63)).